A 317-amino-acid polypeptide reads, in one-letter code: Sulfate adenylyltransferase subunit 2 (317 aa).

Residues 1 to 10 (MSNAVHETDS) show a composition bias toward basic and acidic residues. Disordered stretches follow at residues 1–21 (MSNA…PPLD) and 298–317 (RAID…EGYF).

Belongs to the PAPS reductase family. CysD subfamily. In terms of assembly, heterodimer composed of CysD, the smaller subunit, and CysN.

It catalyses the reaction sulfate + ATP + H(+) = adenosine 5'-phosphosulfate + diphosphate. It functions in the pathway sulfur metabolism; hydrogen sulfide biosynthesis; sulfite from sulfate: step 1/3. Its function is as follows. With CysN forms the ATP sulfurylase (ATPS) that catalyzes the adenylation of sulfate producing adenosine 5'-phosphosulfate (APS) and diphosphate, the first enzymatic step in sulfur assimilation pathway. APS synthesis involves the formation of a high-energy phosphoric-sulfuric acid anhydride bond driven by GTP hydrolysis by CysN coupled to ATP hydrolysis by CysD. This Agrobacterium fabrum (strain C58 / ATCC 33970) (Agrobacterium tumefaciens (strain C58)) protein is Sulfate adenylyltransferase subunit 2.